Here is a 308-residue protein sequence, read N- to C-terminus: Insoluble matrix shell protein 4 (308 aa).

Disordered stretches follow at residues 1 to 21, 47 to 104, and 134 to 250; these read HGNG…GNGY, NTNS…PNAV, and YDSN…NTNS. Positions 47–99 are enriched in low complexity; that stretch reads NTNSLNGNNNGNSNNNGNGNNNGNSNNNGNGNNNGNTNNGNSYDSNTNDDSNS.

As to expression, component of the acid-insoluble organic matrix of the calcified shell.

It localises to the secreted. This chain is Insoluble matrix shell protein 4, found in Ruditapes philippinarum (Japanese carpet shell).